An 865-amino-acid polypeptide reads, in one-letter code: Xylosyltransferase 2 (865 aa).

The Cytoplasmic segment spans residues 1 to 15 (MVASARVQKLVRRYK). A helical; Signal-anchor for type II membrane protein transmembrane segment spans residues 16–36 (LAIATALAILLLQGLVVWSFS). Topologically, residues 37–865 (GLEEDEPGEK…GPVKADGRLR (829 aa)) are lumenal. Residues 39-157 (EEDEPGEKGR…EGAPQPTDNG (119 aa)) are disordered. Over residues 53–65 (RPLDPGEGSKDTD) the composition is skewed to basic and acidic residues. Residues 73–82 (SAGRRHGRWR) show a composition bias toward basic residues. Residue asparagine 122 is glycosylated (N-linked (GlcNAc...) asparagine). A compositionally biased stretch (low complexity) spans 125–137 (GAAAGEALVGAAG). 4 cysteine pairs are disulfide-bonded: cysteine 162-cysteine 190, cysteine 206-cysteine 448, cysteine 467-cysteine 480, and cysteine 469-cysteine 478. UDP-alpha-D-xylose-binding positions include valine 239, aspartate 267, and 296–298 (TIW). Residue asparagine 327 is glycosylated (N-linked (GlcNAc...) asparagine). Residue 400-401 (DW) coordinates UDP-alpha-D-xylose. Residues serine 481 and 504–505 (RK) each bind UDP-alpha-D-xylose. Intrachain disulfides connect cysteine 581-cysteine 833 and cysteine 826-cysteine 839. The N-linked (GlcNAc...) asparagine glycan is linked to asparagine 683.

The protein belongs to the glycosyltransferase 14 family. XylT subfamily. As to quaternary structure, monomer. Mg(2+) serves as cofactor. It depends on Mn(2+) as a cofactor. Contains disulfide bonds.

The protein localises to the golgi apparatus membrane. The protein resides in the secreted. The catalysed reaction is UDP-alpha-D-xylose + L-seryl-[protein] = 3-O-(beta-D-xylosyl)-L-seryl-[protein] + UDP + H(+). It functions in the pathway glycan metabolism; chondroitin sulfate biosynthesis. The protein operates within glycan metabolism; heparan sulfate biosynthesis. Its function is as follows. Catalyzes the first step in the biosynthesis of chondroitin sulfate, heparan sulfate and dermatan sulfate proteoglycans, such as DCN. Transfers D-xylose from UDP-D-xylose to specific serine residues of the core protein. The protein is Xylosyltransferase 2 (XYLT2) of Canis lupus familiaris (Dog).